Consider the following 314-residue polypeptide: Glycerol-3-phosphate dehydrogenase [NAD(P)+] (314 aa).

Residues Ser14, Phe15, Arg35, and Lys108 each coordinate NADPH. 2 residues coordinate sn-glycerol 3-phosphate: Lys108 and Gly136. Ala140 lines the NADPH pocket. Sn-glycerol 3-phosphate is bound by residues Lys191, Asp247, Ser257, Arg258, and Asn259. The active-site Proton acceptor is Lys191. Arg258 contributes to the NADPH binding site. NADPH is bound by residues Leu282 and Glu284.

Belongs to the NAD-dependent glycerol-3-phosphate dehydrogenase family.

The protein resides in the cytoplasm. It catalyses the reaction sn-glycerol 3-phosphate + NAD(+) = dihydroxyacetone phosphate + NADH + H(+). It carries out the reaction sn-glycerol 3-phosphate + NADP(+) = dihydroxyacetone phosphate + NADPH + H(+). It participates in membrane lipid metabolism; glycerophospholipid metabolism. Catalyzes the reduction of the glycolytic intermediate dihydroxyacetone phosphate (DHAP) to sn-glycerol 3-phosphate (G3P), the key precursor for phospholipid synthesis. This chain is Glycerol-3-phosphate dehydrogenase [NAD(P)+], found in Rickettsia bellii (strain OSU 85-389).